Reading from the N-terminus, the 185-residue chain is Ribosome-recycling factor (185 aa).

The protein belongs to the RRF family.

Its subcellular location is the cytoplasm. Its function is as follows. Responsible for the release of ribosomes from messenger RNA at the termination of protein biosynthesis. May increase the efficiency of translation by recycling ribosomes from one round of translation to another. The polypeptide is Ribosome-recycling factor (Dehalococcoides mccartyi (strain CBDB1)).